A 105-amino-acid chain; its full sequence is Nucleoid-associated protein RPE_4812 (105 aa).

Belongs to the YbaB/EbfC family. As to quaternary structure, homodimer.

The protein localises to the cytoplasm. It localises to the nucleoid. In terms of biological role, binds to DNA and alters its conformation. May be involved in regulation of gene expression, nucleoid organization and DNA protection. This Rhodopseudomonas palustris (strain BisA53) protein is Nucleoid-associated protein RPE_4812.